Consider the following 917-residue polypeptide: MFVASPVKTNFNGVSLVKSPAFSALSCRKQHRVPISRQVRAVISREEKAVDQEDGKKSTNKPLINSSQFPWQRSKYTGSKTVTAVVKIRKKIKEKLTERFEHQLELFMKAIGQGMLIQLVSEEIDPETGKGRKSLESPVMGLPKAVKDPRYLVFTADFTVPINFGKPGAILVTNLLSTEICLSEIIIEDSTDTILFPANTWIHSKNDNPQARIIFRSQPCLPSETPDGIKELREKDLVSVRGDGKGERKPHERIYDYDVYNDLGDPRKTERVRPVLGVPETPYPRRCRTGRPLVSKDPPCESRGKEKEEFYVPRDEVFEEIKRDTFRAGRFKALFHNLVPSIAAALSNLDIPFTCFSDIDNLYKSNIVLGHTEPKDTGLGGFIGGFMNGILNVTETLLKYDTPAVIKWDRFAWLRDNEFGRQALAGVNPVNIELLKELPIRSNLDPALYGPQESVLTEEIIAREVEHYGTTIEKALEEKRLFLVDYHDILLPFVEKINSIKEDPRKTYASRTIFFYSKNGALRPLAIELSLPPTAESENKFVYTHGHDATTHWIWKLAKAHVCSNDAGVHQLVNHWLRTHASMEPYIIATNRQLSTMHPVYKLLHPHMRYTLEINARARKSLINGGGIIESCFTPGKYAMELSSAAYKSMWRFDMEGLPADLVRRGMAEEDSSAECGVRLVIDDYPYAADGLLIWKAIKDLVESYVKHFYSDSKSITSDLELQAWWDEIKNKGHYDKKDEPWWPKLNTTQDLSQILTNMIWIASGQHAAINFGQYPFGGYVPNRPTLLRKLIPQETDPDYEMFMRNPQYSFLGSLPTQLQATKVMAVQETLSTHSPDEEYLIELREVQRHWFQDEQVVKYFNKFSEELVKIEKTINERNKDKKLKNRTGAGMPPYELLLPTSPHGVTGRGIPNSISI.

Residues 1-40 (MFVASPVKTNFNGVSLVKSPAFSALSCRKQHRVPISRQVR) constitute a chloroplast transit peptide. Residues 46–57 (EEKAVDQEDGKK) are compositionally biased toward basic and acidic residues. Residues 46–66 (EEKAVDQEDGKKSTNKPLINS) form a disordered region. In terms of domain architecture, PLAT spans 98–216 (ERFEHQLELF…DNPQARIIFR (119 aa)). Positions 219 to 917 (PCLPSETPDG…GRGIPNSISI (699 aa)) constitute a Lipoxygenase domain. 4 residues coordinate Fe cation: H575, H580, H767, and N771. Residues 880 to 904 (KDKKLKNRTGAGMPPYELLLPTSPH) form a disordered region. I917 lines the Fe cation pocket.

Belongs to the lipoxygenase family. It depends on Fe cation as a cofactor.

It is found in the plastid. The protein localises to the chloroplast. It carries out the reaction (9Z,12Z)-octadecadienoate + O2 = (13S)-hydroperoxy-(9Z,11E)-octadecadienoate. The catalysed reaction is (9Z,12Z,15Z)-octadecatrienoate + O2 = (13S)-hydroperoxy-(9Z,11E,15Z)-octadecatrienoate. It participates in lipid metabolism; oxylipin biosynthesis. Its function is as follows. Plant lipoxygenases may be involved in a number of diverse aspects of plant physiology including growth and development, pest resistance, and senescence or responses to wounding. Catalyzes the hydroperoxidation of lipids containing a cis,cis-1,4-pentadiene structure. 13S-lipoxygenase that can use linolenic acid as substrates. The chain is Lipoxygenase 6, chloroplastic from Arabidopsis thaliana (Mouse-ear cress).